Here is a 102-residue protein sequence, read N- to C-terminus: uncharacterized protein (102 aa).

The segment at 1–21 (MAESVNENNNNAGDSNGSGRT) is disordered. An N-linked (GlcNAc...) asparagine glycan is attached at asparagine 16. Residues 24-44 (NTIVTIVVVVIVVTLIIILAT) form a helical membrane-spanning segment. Positions 49–102 (IGGSGKKVGAEEPATKLSSKSDDRNGGPNKKSPAKGSSKDDNNTEESVQSNLYG) are disordered. Positions 56-73 (VGAEEPATKLSSKSDDRN) are enriched in basic and acidic residues. N-linked (GlcNAc...) asparagine glycosylation occurs at asparagine 90. Over residues 93–102 (EESVQSNLYG) the composition is skewed to polar residues.

Its subcellular location is the membrane. This is an uncharacterized protein from Encephalitozoon cuniculi (strain GB-M1) (Microsporidian parasite).